The chain runs to 419 residues: UDP-N-acetylglucosamine 1-carboxyvinyltransferase (419 aa).

Lys-22–Asn-23 contributes to the phosphoenolpyruvate binding site. Arg-95 is a UDP-N-acetyl-alpha-D-glucosamine binding site. Cys-119 acts as the Proton donor in catalysis. Residue Cys-119 is modified to 2-(S-cysteinyl)pyruvic acid O-phosphothioketal. UDP-N-acetyl-alpha-D-glucosamine contacts are provided by residues Lys-164 to Val-167, Asp-308, and Ile-330.

This sequence belongs to the EPSP synthase family. MurA subfamily.

The protein localises to the cytoplasm. The enzyme catalyses phosphoenolpyruvate + UDP-N-acetyl-alpha-D-glucosamine = UDP-N-acetyl-3-O-(1-carboxyvinyl)-alpha-D-glucosamine + phosphate. It participates in cell wall biogenesis; peptidoglycan biosynthesis. Cell wall formation. Adds enolpyruvyl to UDP-N-acetylglucosamine. The sequence is that of UDP-N-acetylglucosamine 1-carboxyvinyltransferase from Rickettsia canadensis (strain McKiel).